The sequence spans 669 residues: Protein ENTREP3 (669 aa).

3 helical membrane passes run 34–54 (LLTL…FSMV), 67–87 (SCPS…IVSW), and 91–111 (FTLV…LSMA). Residue asparagine 160 is glycosylated (N-linked (GlcNAc...) asparagine). The helical transmembrane segment at 174–194 (LFSVCGLTICAAIICTLSAIV) threads the bilayer. Serine 359 and serine 390 each carry phosphoserine. 3 disordered regions span residues 387-420 (FEDS…PTAA), 445-502 (PRGG…TTSS), and 550-571 (RSAE…SGPT). Low complexity predominate over residues 399–408 (AARSYSCSAP). Serine 494 carries the phosphoserine modification. Serine 575 is modified (phosphoserine). The tract at residues 597 to 624 (RRSPDPTGTGAHGYKQVRRSPWGRPGRE) is disordered.

Belongs to the ENTREP family. In terms of assembly, may interact with WWOX.

It localises to the membrane. This is Protein ENTREP3 from Mus musculus (Mouse).